Consider the following 188-residue polypeptide: Ribosome maturation factor RimM (188 aa).

Residues 93 to 175 (QDEFYFTDLI…EIEVQGDLSD (83 aa)) enclose the PRC barrel domain.

It belongs to the RimM family. Binds ribosomal protein uS19.

Its subcellular location is the cytoplasm. An accessory protein needed during the final step in the assembly of 30S ribosomal subunit, possibly for assembly of the head region. Essential for efficient processing of 16S rRNA. May be needed both before and after RbfA during the maturation of 16S rRNA. It has affinity for free ribosomal 30S subunits but not for 70S ribosomes. The sequence is that of Ribosome maturation factor RimM from Gluconacetobacter diazotrophicus (strain ATCC 49037 / DSM 5601 / CCUG 37298 / CIP 103539 / LMG 7603 / PAl5).